A 1103-amino-acid polypeptide reads, in one-letter code: Platelet-derived growth factor receptor beta (1103 aa).

The first 31 residues, Met1–Gly31, serve as a signal peptide directing secretion. Ig-like C2-type domains lie at Leu33–Val120, Pro129–Gln210, Ile214–Thr309, His331–Ala403, and Pro416–Val524. Residues Leu33–Val532 are Extracellular-facing. Asn45 and Asn89 each carry an N-linked (GlcNAc...) asparagine glycan. Disulfide bonds link Cys54–Cys100 and Cys149–Cys190. N-linked (GlcNAc...) asparagine glycans are attached at residues Asn215 and Asn230. An intrachain disulfide couples Cys235 to Cys291. Residues Asn292, Asn307, Asn354, Asn371, Asn468, and Asn479 are each glycosylated (N-linked (GlcNAc...) asparagine). Cysteines 436 and 508 form a disulfide. The chain crosses the membrane as a helical span at residues Val533–Ile553. The Cytoplasmic segment spans residues Met554–Leu1103. Phosphotyrosine; by autocatalysis occurs at positions 562, 579, and 581. Residues Leu600–Leu962 enclose the Protein kinase domain. Residues Leu606 to Val614 and Lys634 each bind ATP. Phosphotyrosine; by ABL1 and ABL2 is present on Tyr686. A phosphotyrosine; by autocatalysis mark is found at Tyr716, Tyr740, Tyr751, Tyr763, Tyr771, Tyr775, and Tyr778. The Proton acceptor role is filled by Asp826. Tyr857 carries the phosphotyrosine; by autocatalysis modification. Residues Tyr934 and Tyr970 each carry the phosphotyrosine; by ABL1 and ABL2 modification. Phosphotyrosine; by autocatalysis is present on residues Tyr1009 and Tyr1021. Residues Gly1017–Leu1103 are disordered. Positions Ser1039–Cys1059 are enriched in polar residues. Positions Pro1065 to Pro1075 are enriched in acidic residues. Residues Gln1076–Pro1086 show a composition bias toward pro residues.

It belongs to the protein kinase superfamily. Tyr protein kinase family. CSF-1/PDGF receptor subfamily. Interacts with homodimeric PDGFB and PDGFD, and with heterodimers formed by PDGFA and PDGFB. May also interact with homodimeric PDGFC. Monomer in the absence of bound ligand. Interaction with homodimeric PDGFB, heterodimers formed by PDGFA and PDGFB or homodimeric PDGFD, leads to receptor dimerization, where both PDGFRA homodimers and heterodimers with PDGFRB are observed. Interacts with SH2B2/APS. Interacts directly (tyrosine phosphorylated) with SHB. Interacts (tyrosine phosphorylated) with PIK3R1 and RASA1. Interacts (tyrosine phosphorylated) with CBL. Interacts (tyrosine phosphorylated) with SRC and SRC family kinases. Interacts (tyrosine phosphorylated) with PIK3C2B, maybe indirectly. Interacts (tyrosine phosphorylated) with SHC1, GRB7, GRB10 and NCK1. Interaction with GRB2 is mediated by SHC1. Interacts (via C-terminus) with NHERF1. N-glycosylated. Post-translationally, ubiquitinated. After autophosphorylation, the receptor is polyubiquitinated, leading to its degradation. In terms of processing, autophosphorylated on tyrosine residues upon ligand binding. Autophosphorylation occurs in trans, i.e. one subunit of the dimeric receptor phosphorylates tyrosine residues on the other subunit. Phosphorylation at Tyr-579, and to a lesser degree, Tyr-581 is important for interaction with SRC. Phosphorylation at Tyr-716 is important for interaction with GRB2. Phosphorylation at Tyr-740 and Tyr-751 is important for interaction with PIK3R1. Phosphorylation at Tyr-751 is important for interaction with NCK1. Phosphorylation at Tyr-771 and Tyr-857 is important for interaction with RASA1/GAP. Phosphorylation at Tyr-857 is important for efficient phosphorylation of PLCG1 and PTPN11, resulting in increased phosphorylation of AKT1, MAPK1/ERK2 and/or MAPK3/ERK1, PDCD6IP/ALIX and STAM, and in increased cell proliferation. Phosphorylation at Tyr-1009 is important for interaction with PTPN11. Phosphorylation at Tyr-1009 and Tyr-1021 is important for interaction with PLCG1. Dephosphorylated by PTPRJ at Tyr-751, Tyr-857, Tyr-1009 and Tyr-1021. Dephosphorylated by PTPN2 at Tyr-579 and Tyr-1021.

The protein localises to the cell membrane. It is found in the cytoplasmic vesicle. The protein resides in the lysosome lumen. It carries out the reaction L-tyrosyl-[protein] + ATP = O-phospho-L-tyrosyl-[protein] + ADP + H(+). Present in an inactive conformation in the absence of bound ligand. Binding of PDGFB and/or PDGFD leads to dimerization and activation by autophosphorylation on tyrosine residues. Functionally, tyrosine-protein kinase that acts as a cell-surface receptor for homodimeric PDGFB and PDGFD and for heterodimers formed by PDGFA and PDGFB, and plays an essential role in the regulation of embryonic development, cell proliferation, survival, differentiation, chemotaxis and migration. Plays an essential role in blood vessel development by promoting proliferation, migration and recruitment of pericytes and smooth muscle cells to endothelial cells. Plays a role in the migration of vascular smooth muscle cells and the formation of neointima at vascular injury sites. Required for normal development of the cardiovascular system. Required for normal recruitment of pericytes (mesangial cells) in the kidney glomerulus, and for normal formation of a branched network of capillaries in kidney glomeruli. Promotes rearrangement of the actin cytoskeleton and the formation of membrane ruffles. Binding of its cognate ligands - homodimeric PDGFB, heterodimers formed by PDGFA and PDGFB or homodimeric PDGFD -leads to the activation of several signaling cascades; the response depends on the nature of the bound ligand and is modulated by the formation of heterodimers between PDGFRA and PDGFRB. Phosphorylates PLCG1, PIK3R1, PTPN11, RASA1/GAP, CBL, SHC1 and NCK1. Activation of PLCG1 leads to the production of the cellular signaling molecules diacylglycerol and inositol 1,4,5-trisphosphate, mobilization of cytosolic Ca(2+) and the activation of protein kinase C. Phosphorylation of PIK3R1, the regulatory subunit of phosphatidylinositol 3-kinase, leads to the activation of the AKT1 signaling pathway. Phosphorylation of SHC1, or of the C-terminus of PTPN11, creates a binding site for GRB2, resulting in the activation of HRAS, RAF1 and down-stream MAP kinases, including MAPK1/ERK2 and/or MAPK3/ERK1. Promotes phosphorylation and activation of SRC family kinases. Promotes phosphorylation of PDCD6IP/ALIX and STAM. Receptor signaling is down-regulated by protein phosphatases that dephosphorylate the receptor and its down-stream effectors, and by rapid internalization of the activated receptor. This is Platelet-derived growth factor receptor beta (PDGFRB) from Canis lupus familiaris (Dog).